The following is a 470-amino-acid chain: Serine--tRNA ligase (470 aa).

L-serine is bound at residue Thr272–Glu274. Arg303–Glu305 is an ATP binding site. Glu326 contributes to the L-serine binding site. An ATP-binding site is contributed by Glu393–Ser396. Ser428 provides a ligand contact to L-serine.

It belongs to the class-II aminoacyl-tRNA synthetase family. Type-1 seryl-tRNA synthetase subfamily. In terms of assembly, homodimer. The tRNA molecule binds across the dimer.

Its subcellular location is the cytoplasm. The enzyme catalyses tRNA(Ser) + L-serine + ATP = L-seryl-tRNA(Ser) + AMP + diphosphate + H(+). It carries out the reaction tRNA(Sec) + L-serine + ATP = L-seryl-tRNA(Sec) + AMP + diphosphate + H(+). Its pathway is aminoacyl-tRNA biosynthesis; selenocysteinyl-tRNA(Sec) biosynthesis; L-seryl-tRNA(Sec) from L-serine and tRNA(Sec): step 1/1. In terms of biological role, catalyzes the attachment of serine to tRNA(Ser). Is also able to aminoacylate tRNA(Sec) with serine, to form the misacylated tRNA L-seryl-tRNA(Sec), which will be further converted into selenocysteinyl-tRNA(Sec). The chain is Serine--tRNA ligase from Nitrobacter hamburgensis (strain DSM 10229 / NCIMB 13809 / X14).